Here is a 546-residue protein sequence, read N- to C-terminus: Chaperonin GroEL 2 (546 aa).

Residues 29–32, 86–90, glycine 418, 482–484, and aspartate 498 contribute to the ATP site; these read TLGP, DGTTT, and NAA.

This sequence belongs to the chaperonin (HSP60) family. In terms of assembly, forms a cylinder of 14 subunits composed of two heptameric rings stacked back-to-back. Interacts with the co-chaperonin GroES.

It is found in the cytoplasm. The enzyme catalyses ATP + H2O + a folded polypeptide = ADP + phosphate + an unfolded polypeptide.. Functionally, together with its co-chaperonin GroES, plays an essential role in assisting protein folding. The GroEL-GroES system forms a nano-cage that allows encapsulation of the non-native substrate proteins and provides a physical environment optimized to promote and accelerate protein folding. The protein is Chaperonin GroEL 2 of Corynebacterium diphtheriae (strain ATCC 700971 / NCTC 13129 / Biotype gravis).